Reading from the N-terminus, the 1109-residue chain is RNA2 polyprotein (1109 aa).

Belongs to the nepoviruses RNA2 polyprotein family. In terms of processing, specific enzymatic cleavages in vivo by the P1 encoded 3C-like protease yield mature proteins.

It localises to the host cell junction. It is found in the host plasmodesma. The protein localises to the host cytoplasm. The protein resides in the host nucleus. Its subcellular location is the virion. In terms of biological role, implicated in RNA2 replication. Could also be required for nematode transmission of the virus. Its function is as follows. Transports viral genome to neighboring plant cells directly through plasmosdesmata, without any budding. The movement protein allows efficient cell to cell propagation, by bypassing the host cell wall barrier. Acts by forming a tubular structure at the host plasmodesmata, enlarging it enough to allow free passage of virion capsids. This chain is RNA2 polyprotein, found in Vitis rupestris (Grape).